A 432-amino-acid polypeptide reads, in one-letter code: MGKSVVILGAQWGDEGKGKIVDLLTDRVKYVVRYQGGHNAGHTLIINGEKTVLRLIPSGMLHPNVTCLIGNGVVVSPEALMKEMGELESRGIKVRERLLISEACPLILPYHVAMDHAREAALGKKAIGTTGRGIGPAYEDKVARRGLRVGDLFNKEAFAEKLKNILEYYNFQLVNYYKVEPVDYQKTLDDVMAIADVITGMVADITTILDTARKNGEHILFEGAQGTMLDIDHGTYPYVTSSNTTAGGVATGSGFGPRNLDYVLGIIKAYCTRVGGGPFTTELFDDVGAEIARKGNEFGAVTGRPRRCGWFDAVAIRRAIQLNSISGFCMTKLDVLDGFDEVKICVAYKMPNGEIVEYAPLAAKDWEGVEPIYETLPGWKENTFRITDVNKLPQNCINYIKRIEEVTGVPIDILSTGPDRVETMILRDPFAA.

Residues 13-19 (GDEGKGK) and 41-43 (GHT) each bind GTP. Asp14 acts as the Proton acceptor in catalysis. Positions 14 and 41 each coordinate Mg(2+). IMP-binding positions include 14 to 17 (DEGK), 39 to 42 (NAGH), Thr130, Arg144, Gln225, Thr240, and Arg304. The Proton donor role is filled by His42. 300 to 306 (AVTGRPR) lines the substrate pocket. GTP is bound by residues Arg306, 332 to 334 (KLD), and 415 to 417 (STG).

The protein belongs to the adenylosuccinate synthetase family. Homodimer. Requires Mg(2+) as cofactor.

Its subcellular location is the cytoplasm. The enzyme catalyses IMP + L-aspartate + GTP = N(6)-(1,2-dicarboxyethyl)-AMP + GDP + phosphate + 2 H(+). It functions in the pathway purine metabolism; AMP biosynthesis via de novo pathway; AMP from IMP: step 1/2. Its function is as follows. Plays an important role in the de novo pathway of purine nucleotide biosynthesis. Catalyzes the first committed step in the biosynthesis of AMP from IMP. This is Adenylosuccinate synthetase from Haemophilus influenzae (strain 86-028NP).